We begin with the raw amino-acid sequence, 67 residues long: DNA-directed RNA polymerase subunit omega (67 aa).

This sequence belongs to the RNA polymerase subunit omega family. The RNAP catalytic core consists of 2 alpha, 1 beta, 1 beta' and 1 omega subunit. When a sigma factor is associated with the core the holoenzyme is formed, which can initiate transcription.

The catalysed reaction is RNA(n) + a ribonucleoside 5'-triphosphate = RNA(n+1) + diphosphate. In terms of biological role, promotes RNA polymerase assembly. Latches the N- and C-terminal regions of the beta' subunit thereby facilitating its interaction with the beta and alpha subunits. The polypeptide is DNA-directed RNA polymerase subunit omega (Variovorax paradoxus (strain S110)).